Here is a 412-residue protein sequence, read N- to C-terminus: NADH-quinone oxidoreductase subunit D (412 aa).

Belongs to the complex I 49 kDa subunit family. As to quaternary structure, NDH-1 is composed of 14 different subunits. Subunits NuoB, C, D, E, F, and G constitute the peripheral sector of the complex.

Its subcellular location is the cell inner membrane. It catalyses the reaction a quinone + NADH + 5 H(+)(in) = a quinol + NAD(+) + 4 H(+)(out). Functionally, NDH-1 shuttles electrons from NADH, via FMN and iron-sulfur (Fe-S) centers, to quinones in the respiratory chain. The immediate electron acceptor for the enzyme in this species is believed to be ubiquinone. Couples the redox reaction to proton translocation (for every two electrons transferred, four hydrogen ions are translocated across the cytoplasmic membrane), and thus conserves the redox energy in a proton gradient. The polypeptide is NADH-quinone oxidoreductase subunit D (Sulfurimonas denitrificans (strain ATCC 33889 / DSM 1251) (Thiomicrospira denitrificans (strain ATCC 33889 / DSM 1251))).